The sequence spans 325 residues: Putative HTH-type transcriptional regulatory protein HQ_3058A (325 aa).

The region spanning 132–186 (LADEREERGWSLGRLATELGVSRRTVSKYEDGMNASIEIAIQLEEVFDEPFSSPL) is the HTH cro/C1-type domain. A DNA-binding region (H-T-H motif) is located at residues 143 to 162 (LGRLATELGVSRRTVSKYED). The segment at 189 to 211 (MEGAESVRDSEPTPDDPDPDADD) is disordered. A compositionally biased stretch (acidic residues) spans 200–211 (PTPDDPDPDADD).

This is Putative HTH-type transcriptional regulatory protein HQ_3058A from Haloquadratum walsbyi (strain DSM 16790 / HBSQ001).